The chain runs to 212 residues: Transmembrane protein 186 (212 aa).

At Met-1–Thr-78 the chain is on the mitochondrial matrix side. Residues Ala-79–Phe-99 traverse the membrane as a helical segment. The Mitochondrial intermembrane portion of the chain corresponds to Ser-100–Ser-101. Residues Leu-102–Phe-122 form a helical membrane-spanning segment. Residues Phe-123–Lys-212 lie on the Mitochondrial matrix side of the membrane.

Belongs to the TMEM186 family. In terms of assembly, part of the mitochondrial complex I assembly/MCIA complex that comprises at least the core subunits TMEM126B, NDUFAF1, ECSIT and ACAD9 and complement subunits such as COA1 and TMEM186. Interacts with MT-ND3.

The protein localises to the mitochondrion inner membrane. Functionally, as part of the MCIA complex, required for efficient assembly of the mitochondrial complex I. This Bos taurus (Bovine) protein is Transmembrane protein 186.